The sequence spans 430 residues: Histidinol dehydrogenase (430 aa).

3 residues coordinate NAD(+): Tyr131, Gln192, and Asn215. Residues Ser238, Gln260, and His263 each contribute to the substrate site. Residues Gln260 and His263 each coordinate Zn(2+). Active-site proton acceptor residues include Glu328 and His329. Residues His329, Asp362, Glu416, and His421 each contribute to the substrate site. Asp362 contacts Zn(2+). His421 provides a ligand contact to Zn(2+).

The protein belongs to the histidinol dehydrogenase family. The cofactor is Zn(2+).

It catalyses the reaction L-histidinol + 2 NAD(+) + H2O = L-histidine + 2 NADH + 3 H(+). It participates in amino-acid biosynthesis; L-histidine biosynthesis; L-histidine from 5-phospho-alpha-D-ribose 1-diphosphate: step 9/9. In terms of biological role, catalyzes the sequential NAD-dependent oxidations of L-histidinol to L-histidinaldehyde and then to L-histidine. The chain is Histidinol dehydrogenase from Acinetobacter baylyi (strain ATCC 33305 / BD413 / ADP1).